A 554-amino-acid chain; its full sequence is 3-(3-hydroxy-phenyl)propionate/3-hydroxycinnamic acid hydroxylase (554 aa).

FAD-binding positions include 17 to 46 (QVAI…VVEK) and 285 to 295 (FRINRVLLAGD).

Belongs to the PheA/TfdB FAD monooxygenase family. FAD serves as cofactor.

The catalysed reaction is 3-(3-hydroxyphenyl)propanoate + NADH + O2 + H(+) = 3-(2,3-dihydroxyphenyl)propanoate + NAD(+) + H2O. It carries out the reaction (2E)-3-(3-hydroxyphenyl)prop-2-enoate + NADH + O2 + H(+) = (2E)-3-(2,3-dihydroxyphenyl)prop-2-enoate + NAD(+) + H2O. It participates in aromatic compound metabolism; 3-phenylpropanoate degradation. Catalyzes the insertion of one atom of molecular oxygen into position 2 of the phenyl ring of 3-(3-hydroxyphenyl)propionate (3-HPP) and hydroxycinnamic acid (3HCI). The sequence is that of 3-(3-hydroxy-phenyl)propionate/3-hydroxycinnamic acid hydroxylase from Klebsiella pneumoniae subsp. pneumoniae (strain ATCC 700721 / MGH 78578).